Here is a 268-residue protein sequence, read N- to C-terminus: MNRYAQLFSRLDEANQGAFVPFVMLGDPTPELSLAIVDALVAGGADALELGIPFSDPVADGPTIQGAALRAFESHTTPDDCFELLGRIRAKYPQLPIGLLVYANLVYVRKIDGFYEKCQQAGVDSVLVADVPVQMCAPYKAAADKFGIDSIFIAPPNGDAETLKQVAELGNGYTYLVSRAGVTGAETKAGMPVEGLINTLREFNAPPALLGFGISEPTQVREAIAAGAAGAISGSAVVKIIETHHQNPEHMLNRLKEFVEGMKAATNR.

Active-site proton acceptor residues include E49 and D60.

The protein belongs to the TrpA family. As to quaternary structure, tetramer of two alpha and two beta chains.

The catalysed reaction is (1S,2R)-1-C-(indol-3-yl)glycerol 3-phosphate + L-serine = D-glyceraldehyde 3-phosphate + L-tryptophan + H2O. The protein operates within amino-acid biosynthesis; L-tryptophan biosynthesis; L-tryptophan from chorismate: step 5/5. Functionally, the alpha subunit is responsible for the aldol cleavage of indoleglycerol phosphate to indole and glyceraldehyde 3-phosphate. This Aeromonas hydrophila subsp. hydrophila (strain ATCC 7966 / DSM 30187 / BCRC 13018 / CCUG 14551 / JCM 1027 / KCTC 2358 / NCIMB 9240 / NCTC 8049) protein is Tryptophan synthase alpha chain.